Here is a 456-residue protein sequence, read N- to C-terminus: L-2-hydroxyglutarate dehydrogenase, mitochondrial (456 aa).

The transit peptide at 1–20 directs the protein to the mitochondrion; sequence MLKTSFLLSKRNAVSLSRVL.

The protein belongs to the L2HGDH family. Requires FAD as cofactor.

The protein localises to the mitochondrion. It carries out the reaction (S)-2-hydroxyglutarate + A = 2-oxoglutarate + AH2. This Nematostella vectensis (Starlet sea anemone) protein is L-2-hydroxyglutarate dehydrogenase, mitochondrial.